Reading from the N-terminus, the 1249-residue chain is Voltage-dependent calcium channel unc-36 (1249 aa).

Residues 1–19 (MRVVHLLVVLATYVSTTSS) form the signal peptide. The Extracellular portion of the chain corresponds to 20 to 1228 (FNKESIKECA…SENERRPCST (1209 aa)). Asn100, Asn140, Asn146, Asn302, Asn520, Asn558, Asn757, Asn838, Asn903, Asn923, and Asn1130 each carry an N-linked (GlcNAc...) asparagine glycan. Residues 250-479 (NVLIMLDMSG…EKIHHYIRRM (230 aa)) form the VWFA domain. A helical transmembrane segment spans residues 1229–1248 (SPTIVSIFQILFGVFLHFCI). Position 1249 (Phe1249) is a topological domain, cytoplasmic.

In terms of tissue distribution, decendants of the cells AB and AB.p (that give rise to nearly all non-pharyngeal neurons), decendants of P1 (that give rise to body muscle) and cell lineages that give rise to the adult and juvenile motor neurons. Expressed in body wall, vulval muscle and pharyngeal muscle.

The protein localises to the membrane. Its function is as follows. May act as an auxiliary subunit of the unc-2 voltage-gated calcium channel which appears to trigger calcium-activated signaling pathways that control the serotonin response. Inhibiting serotonin sensitivity of the vulval muscles results in egg laying defects. May act in both neurons and muscle cells to enhance motor activity as it is required for coordinated movement. Has a role in neural depolarization-induced calcium influx and pharyngeal pumping. Involved in restricting the expression of the putative olfactory receptor str-2 to only one of the two AWC neurons. The chain is Voltage-dependent calcium channel unc-36 (unc-36) from Caenorhabditis elegans.